A 268-amino-acid polypeptide reads, in one-letter code: Myeloid leukemia factor 1 (268 aa).

A phosphoserine mark is found at serine 8, serine 32, and serine 34. 2 disordered regions span residues 44–66 and 209–268; these read ISDGRGRAHNRRGHNDGEDSLTH and GRHN…SNKK. An interaction with COPS3 region spans residues 50–125; it reads RAHNRRGHND…IGDEPPKVFQ (76 aa). Basic and acidic residues-rich tracts occupy residues 56–65 and 226–237; these read GHNDGEDSLT and PGSRELKRREKP.

The protein belongs to the MLF family. Interacts with CENPU. Also interacts with NRBP1/MADM, YWHAZ/14-3-3-zeta and HNRPUL2/MANP. NRBP1 recruits a serine kinase which phosphorylates both itself and MLF1. Phosphorylated MLF1 then binds to YWHAZ and is retained in the cytoplasm. Retained in the nucleus by binding to HNRPUL2. Binds to COPS3/CSN3 which is required for suppression of COP1 and activation of p53. In terms of processing, phosphorylation is required for binding to YWHAZ. In terms of tissue distribution, most abundant in testis, ovary, skeletal muscle, heart, kidney and colon. Low expression in spleen, thymus and peripheral blood leukocytes.

Its subcellular location is the cytoplasm. The protein localises to the nucleus. The protein resides in the cell projection. It is found in the cilium. It localises to the cytoskeleton. Its subcellular location is the cilium basal body. In terms of biological role, involved in lineage commitment of primary hemopoietic progenitors by restricting erythroid formation and enhancing myeloid formation. Interferes with erythropoietin-induced erythroid terminal differentiation by preventing cells from exiting the cell cycle through suppression of CDKN1B/p27Kip1 levels. Suppresses COP1 activity via CSN3 which activates p53 and induces cell cycle arrest. Binds DNA and affects the expression of a number of genes so may function as a transcription factor in the nucleus. The chain is Myeloid leukemia factor 1 (MLF1) from Homo sapiens (Human).